An 81-amino-acid chain; its full sequence is Large ribosomal subunit protein bL31 (81 aa).

Belongs to the bacterial ribosomal protein bL31 family. Type A subfamily. Part of the 50S ribosomal subunit.

Binds the 23S rRNA. The protein is Large ribosomal subunit protein bL31 (rpmE) of Fusobacterium nucleatum subsp. nucleatum (strain ATCC 25586 / DSM 15643 / BCRC 10681 / CIP 101130 / JCM 8532 / KCTC 2640 / LMG 13131 / VPI 4355).